A 258-amino-acid chain; its full sequence is Trans-aconitate 2-methyltransferase (258 aa).

The protein belongs to the methyltransferase superfamily. Tam family.

It is found in the cytoplasm. It carries out the reaction trans-aconitate + S-adenosyl-L-methionine = (E)-3-(methoxycarbonyl)pent-2-enedioate + S-adenosyl-L-homocysteine. Its function is as follows. Catalyzes the S-adenosylmethionine monomethyl esterification of trans-aconitate. The polypeptide is Trans-aconitate 2-methyltransferase (Acidovorax sp. (strain JS42)).